Here is a 176-residue protein sequence, read N- to C-terminus: Protein GrpE (176 aa).

It belongs to the GrpE family. As to quaternary structure, homodimer.

It is found in the cytoplasm. Functionally, participates actively in the response to hyperosmotic and heat shock by preventing the aggregation of stress-denatured proteins, in association with DnaK and GrpE. It is the nucleotide exchange factor for DnaK and may function as a thermosensor. Unfolded proteins bind initially to DnaJ; upon interaction with the DnaJ-bound protein, DnaK hydrolyzes its bound ATP, resulting in the formation of a stable complex. GrpE releases ADP from DnaK; ATP binding to DnaK triggers the release of the substrate protein, thus completing the reaction cycle. Several rounds of ATP-dependent interactions between DnaJ, DnaK and GrpE are required for fully efficient folding. This is Protein GrpE from Rickettsia bellii (strain OSU 85-389).